A 218-amino-acid polypeptide reads, in one-letter code: Adenylate kinase (218 aa).

10–15 (GAGKGT) is a binding site for ATP. Residues 30 to 59 (STGDIFREAIAKGTELGRKVQDIVNSGNLV) are NMP. AMP contacts are provided by residues threonine 31, arginine 36, 57–59 (NLV), 85–88 (GYPR), and glutamine 92. Residues 126–163 (TRRVCSKCGKVYNVITLPSKVEGICDDCGGTLIQRDDD) form an LID region. Residue arginine 127 coordinates ATP. Zn(2+)-binding residues include cysteine 130 and cysteine 133. Residue 136 to 137 (VY) participates in ATP binding. Zn(2+) contacts are provided by cysteine 150 and cysteine 153. AMP contacts are provided by arginine 160 and arginine 171. Lysine 199 contacts ATP.

It belongs to the adenylate kinase family. As to quaternary structure, monomer.

The protein localises to the cytoplasm. It catalyses the reaction AMP + ATP = 2 ADP. It functions in the pathway purine metabolism; AMP biosynthesis via salvage pathway; AMP from ADP: step 1/1. In terms of biological role, catalyzes the reversible transfer of the terminal phosphate group between ATP and AMP. Plays an important role in cellular energy homeostasis and in adenine nucleotide metabolism. This Fervidobacterium nodosum (strain ATCC 35602 / DSM 5306 / Rt17-B1) protein is Adenylate kinase.